Here is a 461-residue protein sequence, read N- to C-terminus: Vitamin K-dependent protein C (461 aa).

The first 18 residues, 1–18 (MWQLTSLLLFVATWGISG), serve as a signal peptide directing secretion. T19 is a glycosylation site (O-linked (GalNAc...) threonine). A propeptide spanning residues 19-42 (TPAPLDSVFSSSERAHQVLRIRKR) is cleaved from the precursor. The Gla domain occupies 43–88 (ANSFLEELRHSSLERECIEEICDFEEAKEIFQNVDDTLAFWSKHVD). 4-carboxyglutamate occurs at positions 48, 49, 56, 58, 61, 62, 67, 68, and 71. The cysteines at positions 59 and 64 are disulfide-linked. 4 disulfides stabilise this stretch: C92/C111, C101/C106, C105/C120, and C122/C131. EGF-like domains follow at residues 97-132 (LEHP…RFCQ) and 136-176 (SFLN…LQCH). D113 carries the (3R)-3-hydroxyaspartate modification. N139 carries N-linked (GlcNAc...) asparagine glycosylation. 5 cysteine pairs are disulfide-bonded: C140–C151, C147–C160, C162–C175, C183–C319, and C238–C254. The Peptidase S1 domain occupies 212–450 (LIDGKMTRRG…YLDWIHGHIR (239 aa)). H253 functions as the Charge relay system in the catalytic mechanism. An N-linked (GlcNAc...) asparagine glycan is attached at N290. D299 (charge relay system) is an active-site residue. S347 bears the Phosphoserine; by FAM20C mark. N355 carries N-linked (GlcNAc...) asparagine glycosylation. A glycan (N-linked (GlcNAc...) asparagine; atypical; partial) is linked at N371. Intrachain disulfides connect C373–C387 and C398–C426. S402 acts as the Charge relay system in catalysis.

Belongs to the peptidase S1 family. As to quaternary structure, synthesized as a single chain precursor, which is cleaved into a light chain and a heavy chain held together by a disulfide bond. The enzyme is then activated by thrombin, which cleaves a tetradecapeptide from the amino end of the heavy chain; this reaction, which occurs at the surface of endothelial cells, is strongly promoted by thrombomodulin. Interacts (activated) with iripin-8, a serine protease inhibitor from Ixodes ricinus saliva. The vitamin K-dependent, enzymatic carboxylation of some Glu residues allows the modified protein to bind calcium. In terms of processing, N- and O-glycosylated. Partial (70%) N-glycosylation of Asn-371 with an atypical N-X-C site produces a higher molecular weight form referred to as alpha. The lower molecular weight form, not N-glycosylated at Asn-371, is beta. O-glycosylated with core 1 or possibly core 8 glycans. Post-translationally, the iron and 2-oxoglutarate dependent 3-hydroxylation of aspartate and asparagine is (R) stereospecific within EGF domains. May be phosphorylated on a Ser or Thr in a region (AA 25-30) of the propeptide. Plasma; synthesized in the liver.

The protein localises to the secreted. The protein resides in the golgi apparatus. It localises to the endoplasmic reticulum. It carries out the reaction Degradation of blood coagulation factors Va and VIIIa.. Functionally, protein C is a vitamin K-dependent serine protease that regulates blood coagulation by inactivating factors Va and VIIIa in the presence of calcium ions and phospholipids. Exerts a protective effect on the endothelial cell barrier function. This is Vitamin K-dependent protein C (PROC) from Homo sapiens (Human).